Here is an 89-residue protein sequence, read N- to C-terminus: ATP synthase subunit e, mitochondrial (89 aa).

An N-acetylserine modification is found at Ser-1. The chain crosses the membrane as a helical span at residues 8–25 (YSSLAAGIVYGAYHTYTL).

F-type ATP synthases have 2 components, the catalytic core F(1) and the membrane-embedded component F(0), linked together by a central stalk and a peripheral stalk. The central stalk, also called rotor shaft, is often seen as part of F(1). The peripheral stalk is seen as part of F(0). F(0) contains the membrane channel next to the rotor. F-type ATP synthases form dimers but each monomer functions independently in ATP generation. The dimer consists of 18 different polypeptides: ATP1 (subunit alpha, part of F(1), 3 molecules per monomer), ATP2 (subunit beta, part of F(1), 3 molecules per monomer), ATP3 (subunit gamma, part of the central stalk), ATP4 (subunit b, part of the peripheral stalk), ATP5/OSCP (subunit 5/OSCP, part of the peripheral stalk), ATP6 (subunit a, part of the peripheral stalk), ATP7 (subunit d, part of the peripheral stalk), ATP8 (subunit 8, part of the peripheral stalk), OLI1 (subunit c, part of the rotor, 10 molecules per monomer), ATP14 (subunit h, part of the peripheral stalk), ATP15 (subunit epsilon, part of the central stalk), ATP16 (subunit delta, part of the central stalk), ATP17 (subunit f, part of the peripheral stalk), ATP18 (subunit i/j, part of the peripheral stalk). Dimer-specific subunits are ATP19 (subunit k, at interface between monomers), ATP20 (subunit g, at interface between monomers), TIM11 (subunit e, at interface between monomers). Also contains subunit L.

It is found in the mitochondrion inner membrane. In terms of biological role, mitochondrial membrane ATP synthase (F(1)F(0) ATP synthase or Complex V) produces ATP from ADP in the presence of a proton gradient across the membrane which is generated by electron transport complexes of the respiratory chain. F-type ATP synthases consist of two structural domains, F(1) - containing the extramembraneous catalytic core, and F(0) - containing the membrane proton channel, linked together by a central stalk and a peripheral stalk. During catalysis, ATP synthesis in the catalytic domain of F(1) is coupled via a rotary mechanism of the central stalk subunits to proton translocation. Part of the complex F(0) domain. Minor subunit located with subunit a/ATP6 in the membrane. Together with subunit g/ATP20, probably contributes to membrane curvature at the site of the ATP synthase dimer, ultimately contributing to formation of cristae. The polypeptide is ATP synthase subunit e, mitochondrial (Pichia angusta (Yeast)).